The following is a 186-amino-acid chain: Ribosome-recycling factor (186 aa).

This sequence belongs to the RRF family.

It is found in the cytoplasm. Its function is as follows. Responsible for the release of ribosomes from messenger RNA at the termination of protein biosynthesis. May increase the efficiency of translation by recycling ribosomes from one round of translation to another. This is Ribosome-recycling factor from Burkholderia multivorans (strain ATCC 17616 / 249).